Here is a 155-residue protein sequence, read N- to C-terminus: WPP domain-containing protein 1 (155 aa).

2 disordered regions span residues 1–41 and 124–155; these read MAET…VTIS and SVKAKSNVASPPPKDGDGIESAVDSKIDSSEA. The span at 7–39 shows a compositional bias: low complexity; it reads ESITTSSPPPISETENSTTLPTTETEKNPNPVT. Residues 28–131 are WPP; it reads TTETEKNPNP…LESVKAKSNV (104 aa). Basic and acidic residues predominate over residues 146–155; the sequence is VDSKIDSSEA.

Binds to FPP proteins. Interacts with WAP, WIP1, WIP2 and WIP3 through its WPP domain. Interacts with HSP70-1, HSP70-3 and WIT1. Component of a ternary complex composed of WPP1, HSP70-1 and WIT1. As to expression, expressed in roots, stems and leaves.

Its subcellular location is the nucleus envelope. It is found in the cytoplasm. It localises to the nucleus. The protein resides in the golgi apparatus. The protein localises to the nucleus matrix. Regulates the mitotic activity in roots. Plays a role with HSP70-1 in facilitating WIT1 nuclear envelope targeting. The polypeptide is WPP domain-containing protein 1 (WPP1) (Arabidopsis thaliana (Mouse-ear cress)).